A 651-amino-acid chain; its full sequence is Protein numb homolog (651 aa).

The 161-residue stretch at arginine 33 to glycine 193 folds into the PID domain. Threonine 102 carries the post-translational modification Phosphothreonine; by AAK1. Position 194 is a phosphoserine (serine 194). The interval serine 228–methionine 255 is disordered. Residues threonine 235–serine 252 show a composition bias toward low complexity. Phosphothreonine is present on threonine 243. A Phosphoserine modification is found at serine 244. A phosphoserine; by CaMK1 mark is found at serine 276 and serine 295. 2 disordered regions span residues glutamine 419–glutamine 483 and leucine 623–leucine 651. Position 425 is a phosphoserine (serine 425). The residue at position 436 (threonine 436) is a Phosphothreonine. The span at threonine 436 to lysine 449 shows a compositional bias: basic and acidic residues. The residue at position 438 (serine 438) is a Phosphoserine. Residues alanine 453–valine 466 show a composition bias toward low complexity. Residues arginine 630–glutamine 644 are compositionally biased toward polar residues. Serine 634 is subject to Phosphoserine.

Interacts with SIAH1. Interacts with LNX. Interacts with CDH1. Interacts with TFAP2A and TFAP2B. Interacts with RALBP1 in a complex also containing EPN1 and TFAP2A during interphase and mitosis. Interacts with AAK1. May interact with DUOXA1. Phosphorylated on Ser-276 and Ser-295 by CaMK1. Post-translationally, isoform 1 and isoform 2 are ubiquitinated by LNX leading to their subsequent proteasomal degradation. Ubiquitinated; mediated by SIAH1 and leading to its subsequent proteasomal degradation.

It localises to the cell membrane. The protein localises to the endosome membrane. Regulates clathrin-mediated receptor endocytosis. Plays a role in the process of neurogenesis. Required throughout embryonic neurogenesis to maintain neural progenitor cells, also called radial glial cells (RGCs), by allowing their daughter cells to choose progenitor over neuronal cell fate. Not required for the proliferation of neural progenitor cells before the onset of neurogenesis. Also involved postnatally in the subventricular zone (SVZ) neurogenesis by regulating SVZ neuroblasts survival and ependymal wall integrity. May also mediate local repair of brain ventricular wall damage. The chain is Protein numb homolog from Homo sapiens (Human).